The following is a 572-amino-acid chain: Sulfite reductase [NADPH] hemoprotein beta-component (572 aa).

Cysteine 437, cysteine 443, cysteine 482, and cysteine 486 together coordinate [4Fe-4S] cluster. Cysteine 486 lines the siroheme pocket.

Belongs to the nitrite and sulfite reductase 4Fe-4S domain family. Alpha(8)-beta(8). The alpha component is a flavoprotein, the beta component is a hemoprotein. Siroheme is required as a cofactor. The cofactor is [4Fe-4S] cluster.

It carries out the reaction hydrogen sulfide + 3 NADP(+) + 3 H2O = sulfite + 3 NADPH + 4 H(+). It functions in the pathway sulfur metabolism; hydrogen sulfide biosynthesis; hydrogen sulfide from sulfite (NADPH route): step 1/1. Its function is as follows. Component of the sulfite reductase complex that catalyzes the 6-electron reduction of sulfite to sulfide. This is one of several activities required for the biosynthesis of L-cysteine from sulfate. The chain is Sulfite reductase [NADPH] hemoprotein beta-component from Bacillus licheniformis (strain ATCC 14580 / DSM 13 / JCM 2505 / CCUG 7422 / NBRC 12200 / NCIMB 9375 / NCTC 10341 / NRRL NRS-1264 / Gibson 46).